The sequence spans 173 residues: Protein C2 (173 aa).

A zinc finger lies at 69-85 (CNCHFTIHHECNRGFSH).

It belongs to the geminiviridae transcriptional activator protein family. As to quaternary structure, monomer. Interacting with and inactivating host adenosine kinase 2 (ADK2) in the cytoplasm. Interacts with and inhibits host SNF1 kinase.

The protein resides in the host cytoplasm. Its function is as follows. Acts as a suppressor of RNA-mediated gene silencing, also known as post-transcriptional gene silencing (PTGS), a mechanism of plant viral defense that limits the accumulation of viral RNAs. Suppresses the host RNA silencing by inhibiting adenosine kinase 2 (ADK2), a kinase involved in a general methylation pathway. Also suppresses the host basal defense by interacting with and inhibiting SNF1 kinase, a key regulator of cell metabolism implicated in innate antiviral defense. Determines pathogenicity. The sequence is that of Protein C2 from Beet curly top virus (strain California/Logan) (BCTV).